A 314-amino-acid polypeptide reads, in one-letter code: Coiled-coil domain-containing protein 92 (314 aa).

Coiled coils occupy residues 1–27 (MAATNLENQLHSAQKNLLFLQREHAST) and 59–113 (DSSS…EKKY). Disordered stretches follow at residues 153-193 (LSSS…KKSL) and 251-314 (ASDR…DRTV). A compositionally biased stretch (basic and acidic residues) spans 176 to 186 (PPKDKLPETPR). Residue S192 is modified to Phosphoserine. The segment covering 266–280 (KPHKTHVGVAHRIHH) has biased composition (basic residues).

In terms of assembly, interacts with CEP164. Post-translationally, phosphorylated at Ser-192 by TTBK2.

The protein localises to the cytoplasm. It is found in the cytoskeleton. Its subcellular location is the microtubule organizing center. The protein resides in the centrosome. It localises to the centriole. Interferon-stimulated protein that plays a role in innate immunity. The polypeptide is Coiled-coil domain-containing protein 92 (Ccdc92) (Mus musculus (Mouse)).